Here is a 189-residue protein sequence, read N- to C-terminus: Elongation factor P (189 aa).

The protein belongs to the elongation factor P family.

The protein localises to the cytoplasm. Its pathway is protein biosynthesis; polypeptide chain elongation. Functionally, involved in peptide bond synthesis. Stimulates efficient translation and peptide-bond synthesis on native or reconstituted 70S ribosomes in vitro. Probably functions indirectly by altering the affinity of the ribosome for aminoacyl-tRNA, thus increasing their reactivity as acceptors for peptidyl transferase. This chain is Elongation factor P, found in Orientia tsutsugamushi (strain Boryong) (Rickettsia tsutsugamushi).